The primary structure comprises 278 residues: 4-deoxy-L-threo-5-hexosulose-uronate ketol-isomerase (278 aa).

4 residues coordinate Zn(2+): histidine 196, histidine 198, glutamate 203, and histidine 245.

Belongs to the KduI family. Requires Zn(2+) as cofactor.

The enzyme catalyses 5-dehydro-4-deoxy-D-glucuronate = 3-deoxy-D-glycero-2,5-hexodiulosonate. Its pathway is glycan metabolism; pectin degradation; 2-dehydro-3-deoxy-D-gluconate from pectin: step 4/5. Its function is as follows. Catalyzes the isomerization of 5-dehydro-4-deoxy-D-glucuronate to 3-deoxy-D-glycero-2,5-hexodiulosonate. The protein is 4-deoxy-L-threo-5-hexosulose-uronate ketol-isomerase of Edwardsiella ictaluri (strain 93-146).